Consider the following 215-residue polypeptide: FMN-dependent NADH:quinone oxidoreductase (215 aa).

17 to 19 contributes to the FMN binding site; sequence SAS.

Belongs to the azoreductase type 1 family. Homodimer. FMN is required as a cofactor.

It catalyses the reaction 2 a quinone + NADH + H(+) = 2 a 1,4-benzosemiquinone + NAD(+). The catalysed reaction is N,N-dimethyl-1,4-phenylenediamine + anthranilate + 2 NAD(+) = 2-(4-dimethylaminophenyl)diazenylbenzoate + 2 NADH + 2 H(+). Quinone reductase that provides resistance to thiol-specific stress caused by electrophilic quinones. In terms of biological role, also exhibits azoreductase activity. Catalyzes the reductive cleavage of the azo bond in aromatic azo compounds to the corresponding amines. This is FMN-dependent NADH:quinone oxidoreductase from Clostridium botulinum (strain Eklund 17B / Type B).